The primary structure comprises 83 residues: Conotoxin LiCr95 (83 aa).

Residues 1–22 form the signal peptide; the sequence is MKLTCALIVAMLFLTACQLTTT. Positions 23 to 50 are excised as a propeptide; that stretch reads DDSRGRQKYPTERLRVKMRNPKLSKLTK. Cystine bridges form between cysteine 52/cysteine 67, cysteine 59/cysteine 71, and cysteine 66/cysteine 80.

It belongs to the conotoxin O1 superfamily. In terms of tissue distribution, expressed by the venom duct.

It localises to the secreted. This Conus lividus (Livid cone) protein is Conotoxin LiCr95.